The sequence spans 284 residues: Bifunctional protein FolD 1 (284 aa).

NADP(+) contacts are provided by residues 166–168 and I232; that span reads GAS.

This sequence belongs to the tetrahydrofolate dehydrogenase/cyclohydrolase family. As to quaternary structure, homodimer.

It catalyses the reaction (6R)-5,10-methylene-5,6,7,8-tetrahydrofolate + NADP(+) = (6R)-5,10-methenyltetrahydrofolate + NADPH. The enzyme catalyses (6R)-5,10-methenyltetrahydrofolate + H2O = (6R)-10-formyltetrahydrofolate + H(+). The protein operates within one-carbon metabolism; tetrahydrofolate interconversion. In terms of biological role, catalyzes the oxidation of 5,10-methylenetetrahydrofolate to 5,10-methenyltetrahydrofolate and then the hydrolysis of 5,10-methenyltetrahydrofolate to 10-formyltetrahydrofolate. In Pseudomonas syringae pv. syringae (strain B728a), this protein is Bifunctional protein FolD 1.